The sequence spans 144 residues: Large ribosomal subunit protein uL15 (144 aa).

Positions Met1 to Gly53 are disordered. Over residues Arg21–Gly31 the composition is skewed to gly residues.

It belongs to the universal ribosomal protein uL15 family. As to quaternary structure, part of the 50S ribosomal subunit.

Binds to the 23S rRNA. This chain is Large ribosomal subunit protein uL15, found in Sodalis glossinidius (strain morsitans).